The following is a 321-amino-acid chain: Cytochrome c biogenesis protein CcsA (321 aa).

Helical transmembrane passes span 9–29 (ILTH…LMNL), 44–64 (GMIA…IYSG), 71–91 (LYES…VPYF), 98–118 (FSAI…SGLL), 143–163 (MLLS…LLVI), 225–245 (VISL…VWAN), 252–272 (WNWD…AIYL), and 286–306 (AIVA…VNLL).

Belongs to the CcmF/CycK/Ccl1/NrfE/CcsA family. May interact with Ccs1.

It is found in the plastid. The protein localises to the chloroplast thylakoid membrane. In terms of biological role, required during biogenesis of c-type cytochromes (cytochrome c6 and cytochrome f) at the step of heme attachment. This Acorus calamus var. americanus (American sweet flag) protein is Cytochrome c biogenesis protein CcsA.